A 185-amino-acid polypeptide reads, in one-letter code: UPF0301 protein Shew_1144 (185 aa).

The protein belongs to the UPF0301 (AlgH) family.

The sequence is that of UPF0301 protein Shew_1144 from Shewanella loihica (strain ATCC BAA-1088 / PV-4).